The chain runs to 72 residues: RTCNKTFSDQSKICPPGENICYTKTWCDAWCSQRGKRVELGCAATCPKVKAGVEIKCCSTDDCDKFQFGKPR.

Intrachain disulfides connect Cys-3–Cys-21, Cys-14–Cys-42, Cys-27–Cys-31, Cys-46–Cys-57, and Cys-58–Cys-63.

This sequence belongs to the three-finger toxin family. Long-chain subfamily. Type II alpha-neurotoxin sub-subfamily. In terms of tissue distribution, expressed by the venom gland.

Its subcellular location is the secreted. Its function is as follows. Binds with high affinity to muscular (alpha-1/CHRNA1) and neuronal (alpha-7/CHRNA7) nicotinic acetylcholine receptor (nAChR) and inhibits acetylcholine from binding to the receptor, thereby impairing neuromuscular and neuronal transmission. The chain is Alpha-elapitoxin-Dpp2a from Dendroaspis polylepis polylepis (Black mamba).